We begin with the raw amino-acid sequence, 736 residues long: Cytosolic neutral trehalase (736 aa).

Residues 1–47 (MSEAPQARRVGSVDDHSVYDDAKTYYTSEERHNNSRSGPRQRTYSQN) form a disordered region. Residues 11-33 (GSVDDHSVYDDAKTYYTSEERHN) are compositionally biased toward basic and acidic residues. Polar residues predominate over residues 35 to 47 (SRSGPRQRTYSQN). Ca(2+) is bound by residues aspartate 92, aspartate 94, asparagine 96, glutamine 98, and aspartate 103. Residues arginine 279, 286-287 (WD), asparagine 323, 332-334 (RSQ), glutamate 399, arginine 448, and glycine 451 each bind substrate. Residues aspartate 453 and glutamate 657 each act as proton donor/acceptor in the active site.

This sequence belongs to the glycosyl hydrolase 37 family. Ca(2+) serves as cofactor.

The protein localises to the cytoplasm. The enzyme catalyses alpha,alpha-trehalose + H2O = alpha-D-glucose + beta-D-glucose. It participates in carbohydrate degradation. In terms of biological role, hydrolyzes intracellular trehalose to glucose. Plays a role in pathogenicity, specifically in proliferation of invasive hyphae in rice blast disease. This is Cytosolic neutral trehalase (NTH1) from Pyricularia oryzae (strain 70-15 / ATCC MYA-4617 / FGSC 8958) (Rice blast fungus).